The following is a 300-amino-acid chain: Cation-efflux pump FieF (300 aa).

The next 4 helical transmembrane spans lie at 11–31, 40–60, 81–101, and 114–134; these read LAAV…VFAW, LASL…LLVV, LAAL…ILTG, and PEVG…LVSF. Positions 45 and 49 each coordinate Zn(2+). The Zn(2+) site is built by H153 and D157. Transmembrane regions (helical) follow at residues 156-176 and 182-202; these read SDLL…KGIT and FALG…YDAV.

It belongs to the cation diffusion facilitator (CDF) transporter (TC 2.A.4) family. FieF subfamily. In terms of assembly, homodimer.

The protein resides in the cell inner membrane. It carries out the reaction Zn(2+)(in) + H(+)(out) = Zn(2+)(out) + H(+)(in). It catalyses the reaction Cd(2+)(in) + H(+)(out) = Cd(2+)(out) + H(+)(in). The catalysed reaction is Fe(2+)(in) + H(+)(out) = Fe(2+)(out) + H(+)(in). In terms of biological role, divalent metal cation transporter which exports Zn(2+), Cd(2+) and possibly Fe(2+). May be involved in zinc and iron detoxification by efflux. This Pectobacterium carotovorum subsp. carotovorum (strain PC1) protein is Cation-efflux pump FieF.